The primary structure comprises 114 residues: Iron-sulfur cluster insertion protein ErpA (114 aa).

Positions 42, 106, and 108 each coordinate iron-sulfur cluster.

This sequence belongs to the HesB/IscA family. As to quaternary structure, homodimer. It depends on iron-sulfur cluster as a cofactor.

Its function is as follows. Required for insertion of 4Fe-4S clusters for at least IspG. The polypeptide is Iron-sulfur cluster insertion protein ErpA (Buchnera aphidicola subsp. Acyrthosiphon pisum (strain 5A)).